The following is a 362-amino-acid chain: 3-dehydroquinate synthase (362 aa).

Residues 71–76, 105–109, 129–130, lysine 142, lysine 151, and 169–172 contribute to the NAD(+) site; these read DGEQYK, GVVGD, TT, and CLNT. Zn(2+)-binding residues include glutamate 184, histidine 247, and histidine 264.

Belongs to the sugar phosphate cyclases superfamily. Dehydroquinate synthase family. Requires Co(2+) as cofactor. The cofactor is Zn(2+). NAD(+) is required as a cofactor.

The protein localises to the cytoplasm. The catalysed reaction is 7-phospho-2-dehydro-3-deoxy-D-arabino-heptonate = 3-dehydroquinate + phosphate. It participates in metabolic intermediate biosynthesis; chorismate biosynthesis; chorismate from D-erythrose 4-phosphate and phosphoenolpyruvate: step 2/7. Catalyzes the conversion of 3-deoxy-D-arabino-heptulosonate 7-phosphate (DAHP) to dehydroquinate (DHQ). The polypeptide is 3-dehydroquinate synthase (Enterobacter sp. (strain 638)).